Reading from the N-terminus, the 119-residue chain is Large ribosomal subunit protein uL24 (119 aa).

Belongs to the universal ribosomal protein uL24 family. In terms of assembly, part of the 50S ribosomal subunit.

One of two assembly initiator proteins, it binds directly to the 5'-end of the 23S rRNA, where it nucleates assembly of the 50S subunit. Functionally, one of the proteins that surrounds the polypeptide exit tunnel on the outside of the subunit. This Leptospira interrogans serogroup Icterohaemorrhagiae serovar copenhageni (strain Fiocruz L1-130) protein is Large ribosomal subunit protein uL24.